The following is a 338-amino-acid chain: Large ribosomal subunit protein uL3 (338 aa).

2 disordered regions span residues 230-256 (HRKG…RPGQ) and 315-338 (PARP…SQQP).

Belongs to the universal ribosomal protein uL3 family. Part of the 50S ribosomal subunit. Forms a cluster with proteins L14 and L24e.

One of the primary rRNA binding proteins, it binds directly near the 3'-end of the 23S rRNA, where it nucleates assembly of the 50S subunit. This is Large ribosomal subunit protein uL3 from Pyrobaculum arsenaticum (strain DSM 13514 / JCM 11321 / PZ6).